A 429-amino-acid polypeptide reads, in one-letter code: S-adenosylmethionine synthase (429 aa).

Residue glutamate 9 coordinates Mg(2+). Histidine 15 contributes to the ATP binding site. Glutamate 43 lines the K(+) pocket. The L-methionine site is built by glutamate 56 and glutamine 99. ATP-binding positions include 167–169 (DGK), 235–238 (SGRF), aspartate 246, 252–253 (RK), alanine 269, lysine 273, and lysine 277. Residue aspartate 246 coordinates L-methionine. Residue lysine 277 participates in L-methionine binding.

Belongs to the AdoMet synthase family. As to quaternary structure, homotetramer. The cofactor is Mn(2+). It depends on Mg(2+) as a cofactor. Co(2+) is required as a cofactor. Requires K(+) as cofactor.

It is found in the cytoplasm. It carries out the reaction L-methionine + ATP + H2O = S-adenosyl-L-methionine + phosphate + diphosphate. It participates in amino-acid biosynthesis; S-adenosyl-L-methionine biosynthesis; S-adenosyl-L-methionine from L-methionine: step 1/1. In terms of biological role, catalyzes the formation of S-adenosylmethionine from methionine and ATP. The reaction comprises two steps that are both catalyzed by the same enzyme: formation of S-adenosylmethionine (AdoMet) and triphosphate, and subsequent hydrolysis of the triphosphate. This Carica papaya (Papaya) protein is S-adenosylmethionine synthase (SAMS).